We begin with the raw amino-acid sequence, 1274 residues long: Myosin-1 (1274 aa).

The interval 1–28 is disordered; the sequence is MAPSKKAGKKGAVGGFLSGASKPQKVQK. Positions 41–721 constitute a Myosin motor domain; that stretch reads AGVPDMTLLS…TLFYLEGERD (681 aa). Residue 134–141 participates in ATP binding; that stretch reads GESGAGKT. Position 363 is a phosphoserine (Ser363). Residues 410–492 are actin-binding; sequence VIGVLDIYGF…AGIFATLNDA (83 aa). 2 IQ domains span residues 725 to 745 and 746 to 771; these read HTMA…KHEA and ATKI…YGHQ. The region spanning 779 to 969 is the TH1 domain; the sequence is RRRFSLLGMR…TIQVGSGEPP (191 aa). Disordered stretches follow at residues 951–1029, 1042–1071, and 1116–1248; these read RGDA…PVVT, ARAP…PKEF, and PSNY…QVAQ. The segment covering 957–974 has biased composition (polar residues); it reads KSHTIQVGSGEPPNSLSN. Over residues 1042-1053 the composition is skewed to low complexity; sequence ARAPPSIPGRAA. 2 stretches are compositionally biased toward pro residues: residues 1054–1067 and 1126–1138; these read APPP…PAGP and APPP…PPSR. Residues 1067–1125 form the SH3 domain; sequence PPKEFYKALYNFTGQEGEMNLVKGEEVEVKEKDDNGWWMVVKNGQEGWAPSNYLKKVEQ. 2 stretches are compositionally biased toward low complexity: residues 1139–1157 and 1170–1226; these read PVAA…PAVT and AASA…IGGK.

This sequence belongs to the TRAFAC class myosin-kinesin ATPase superfamily. Myosin family. Phosphorylation of the TEDS site (Ser-363) is required for the polarization of the actin cytoskeleton. Phosphorylation probably activates the myosin-I ATPase activity.

It is found in the cytoplasm. The protein resides in the cytoskeleton. Its subcellular location is the actin patch. Its function is as follows. Type-I myosin implicated in the organization of the actin cytoskeleton. Required for proper actin cytoskeleton polarization. At the cell cortex, assembles in patch-like structures together with proteins from the actin-polymerizing machinery and promotes actin assembly. Functions as actin nucleation-promoting factor (NPF) for the Arp2/3 complex. The polypeptide is Myosin-1 (MYO1) (Cryptococcus neoformans var. neoformans serotype D (strain B-3501A) (Filobasidiella neoformans)).